A 172-amino-acid polypeptide reads, in one-letter code: Nucleoside-triphosphatase THEP1 (172 aa).

ATP-binding positions include 11-18 (GKPGIGKT) and 101-108 (IILIDEIG).

The protein belongs to the THEP1 NTPase family.

The enzyme catalyses a ribonucleoside 5'-triphosphate + H2O = a ribonucleoside 5'-diphosphate + phosphate + H(+). Has nucleotide phosphatase activity towards ATP, GTP, CTP, TTP and UTP. May hydrolyze nucleoside diphosphates with lower efficiency. This is Nucleoside-triphosphatase THEP1 from Sulfolobus acidocaldarius (strain ATCC 33909 / DSM 639 / JCM 8929 / NBRC 15157 / NCIMB 11770).